A 200-amino-acid polypeptide reads, in one-letter code: Dephospho-CoA kinase (200 aa).

Residues 2–200 (LIAVVGKAGV…CHHGHYQTPK (199 aa)) enclose the DPCK domain. Residue 10–15 (GVGKTT) coordinates ATP.

The protein belongs to the CoaE family.

It localises to the cytoplasm. It catalyses the reaction 3'-dephospho-CoA + ATP = ADP + CoA + H(+). It participates in cofactor biosynthesis; coenzyme A biosynthesis; CoA from (R)-pantothenate: step 5/5. In terms of biological role, catalyzes the phosphorylation of the 3'-hydroxyl group of dephosphocoenzyme A to form coenzyme A. The polypeptide is Dephospho-CoA kinase (Mycoplasma pneumoniae (strain ATCC 29342 / M129 / Subtype 1) (Mycoplasmoides pneumoniae)).